The primary structure comprises 1393 residues: DNA glycosylase/AP lyase ROS1 (1393 aa).

3 disordered regions span residues 1–25 (MEKQRREESSFQQPPWIPQTPMKPF), 98–186 (SLSS…TSTR), and 237–265 (LSAPSTPKRKRSQGKRKGVQPKKNGSNLE). Residues 98–108 (SLSSVSNNVAE) are compositionally biased toward low complexity. Basic residues predominate over residues 117–126 (PKRKKHRPKV). Basic and acidic residues-rich tracts occupy residues 127–138 (RREAKPKREPKP) and 162–171 (KKVEVSKDQD). Over residues 243–256 (PKRKRSQGKRKGVQ) the composition is skewed to basic residues. The segment at 528 to 626 (KVDLDDETDR…AFMSLASQFP (99 aa)) is DEMETER. Residues 653–672 (EETMSSPPDHNHSSVTLKNT) are compositionally biased toward polar residues. Disordered stretches follow at residues 653 to 722 (EETM…SVEV) and 789 to 830 (SNQV…CSQQ). The segment covering 687-698 (SRSSSEIAISAH) has biased composition (low complexity). A compositionally biased stretch (basic and acidic residues) spans 699–722 (ESVDKTTDSKEYVDSDRKGSSVEV). Residues 816 to 830 (KSSVDSSEPGCCSQQ) are compositionally biased toward polar residues. Residue Lys901 forms a Glycyl lysine isopeptide (Lys-Gly) (interchain with G-Cter in ubiquitin) linkage. [4Fe-4S] cluster-binding residues include Cys1038, Cys1045, Cys1048, and Cys1054.

Belongs to the DNA glycosylase family. DEMETER subfamily. As to quaternary structure, interacts (via the central region) with ZDP. Binds to RPA2A. Interacts with XRCC1. Interacts probably with a complex made of MBD7, IDM1, IDM2 and IDM3. Interacts with APE1L. [4Fe-4S] cluster is required as a cofactor. Expressed ubiquitously in both vegetative and reproductive organs.

Its subcellular location is the nucleus. It is found in the nucleolus. It carries out the reaction 2'-deoxyribonucleotide-(2'-deoxyribose 5'-phosphate)-2'-deoxyribonucleotide-DNA = a 3'-end 2'-deoxyribonucleotide-(2,3-dehydro-2,3-deoxyribose 5'-phosphate)-DNA + a 5'-end 5'-phospho-2'-deoxyribonucleoside-DNA + H(+). Stimulated by ZDP. Stimulated by XRCC1. Its function is as follows. Bifunctional DNA glycosylase/lyase, which excises 5-methylcytosine (5-meC) and 5-hydroxymethylcytosine (5-hmeC), leaving an apyrimidinic (AP) site that is subsequently incised by the lyase activity. Generates 3'-phosphor-alpha,beta-unsaturated aldehyde (3'-PUA) as a primary 5-meC excision intermediate. Prevents DNA hypermethylation, specifically in the promoter of otherwise silenced loci. May be involved in DNA repair through its nicking activity on methylated DNA. Binds with similar affinity to both methylated and non-methylated DNA. Highly distributive behavior on DNA substrates containing multiple 5-meC residues. Involved with Pol IV in the remodeling of the 5S rDNA chromatin via DNA methylation modifications during the first days of development post-germination. Participates in UV-B induced- and oxidative DNA damage repair. This chain is DNA glycosylase/AP lyase ROS1, found in Arabidopsis thaliana (Mouse-ear cress).